The sequence spans 313 residues: Aspartate carbamoyltransferase catalytic subunit (313 aa).

Carbamoyl phosphate-binding residues include Arg-54 and Thr-55. L-aspartate is bound at residue Lys-82. Positions 104, 132, and 135 each coordinate carbamoyl phosphate. 2 residues coordinate L-aspartate: Arg-165 and Arg-219. Gly-260 and Pro-261 together coordinate carbamoyl phosphate.

This sequence belongs to the aspartate/ornithine carbamoyltransferase superfamily. ATCase family. In terms of assembly, heterododecamer (2C3:3R2) of six catalytic PyrB chains organized as two trimers (C3), and six regulatory PyrI chains organized as three dimers (R2).

The enzyme catalyses carbamoyl phosphate + L-aspartate = N-carbamoyl-L-aspartate + phosphate + H(+). It participates in pyrimidine metabolism; UMP biosynthesis via de novo pathway; (S)-dihydroorotate from bicarbonate: step 2/3. Functionally, catalyzes the condensation of carbamoyl phosphate and aspartate to form carbamoyl aspartate and inorganic phosphate, the committed step in the de novo pyrimidine nucleotide biosynthesis pathway. The polypeptide is Aspartate carbamoyltransferase catalytic subunit (Thermobifida fusca (strain YX)).